A 287-amino-acid chain; its full sequence is Protease HtpX homolog (287 aa).

The next 2 membrane-spanning stretches (helical) occupy residues 5 to 25 (IRTG…GYWI) and 28 to 48 (GAGA…AYWV). His-131 contacts Zn(2+). Glu-132 is a catalytic residue. Position 135 (His-135) interacts with Zn(2+). The next 2 membrane-spanning stretches (helical) occupy residues 146–166 (VTAT…FFGG) and 174–194 (PFAG…ATLV). Glu-203 is a binding site for Zn(2+).

It belongs to the peptidase M48B family. Zn(2+) serves as cofactor.

The protein localises to the cell inner membrane. This chain is Protease HtpX homolog, found in Acidiphilium cryptum (strain JF-5).